A 186-amino-acid chain; its full sequence is Ribosome-recycling factor (186 aa).

The protein belongs to the RRF family.

It localises to the cytoplasm. Responsible for the release of ribosomes from messenger RNA at the termination of protein biosynthesis. May increase the efficiency of translation by recycling ribosomes from one round of translation to another. The sequence is that of Ribosome-recycling factor from Paracidovorax citrulli (strain AAC00-1) (Acidovorax citrulli).